The chain runs to 336 residues: MSWFQKLMPRRIRTDAGPRSRSVPEGLWTKCESCQGILYRPDLERNLEVCPKCGAHMRISARQRLRLFLDESCEAVEIGAELQPSDFLRFRDSKRYRDRLNQAQKATGENDALVAMRGAVHQRPVVVCAFEFGFMGGSMGTIVGERFCRAAEEARANDIPLVCFSASGGARMQEALFSLMQMAKTSAAISRLNEARVPYISVLTDPTMGGVSASLATLGDVIIAEPGALIGFAGPRVIEQTVRETLPEGFQRAEFLLDHGAIDMIVDRRDMRDEIASLMGKLGGDVSVAPAPAPAATVDPEPESAEPEAPAEEAGPAGAAGDQAGESQDEGDPRNA.

The 271-residue stretch at 27 to 297 folds into the CoA carboxyltransferase N-terminal domain; sequence LWTKCESCQG…VAPAPAPAAT (271 aa). Residues cysteine 31, cysteine 34, cysteine 50, and cysteine 53 each contribute to the Zn(2+) site. The segment at 31 to 53 adopts a C4-type zinc-finger fold; the sequence is CESCQGILYRPDLERNLEVCPKC. The tract at residues 287 to 336 is disordered; it reads SVAPAPAPAATVDPEPESAEPEAPAEEAGPAGAAGDQAGESQDEGDPRNA. Residues 300 to 311 show a composition bias toward acidic residues; sequence PEPESAEPEAPA. The span at 312–326 shows a compositional bias: low complexity; the sequence is EEAGPAGAAGDQAGE.

The protein belongs to the AccD/PCCB family. In terms of assembly, acetyl-CoA carboxylase is a heterohexamer composed of biotin carboxyl carrier protein (AccB), biotin carboxylase (AccC) and two subunits each of ACCase subunit alpha (AccA) and ACCase subunit beta (AccD). Zn(2+) is required as a cofactor.

Its subcellular location is the cytoplasm. It catalyses the reaction N(6)-carboxybiotinyl-L-lysyl-[protein] + acetyl-CoA = N(6)-biotinyl-L-lysyl-[protein] + malonyl-CoA. Its pathway is lipid metabolism; malonyl-CoA biosynthesis; malonyl-CoA from acetyl-CoA: step 1/1. In terms of biological role, component of the acetyl coenzyme A carboxylase (ACC) complex. Biotin carboxylase (BC) catalyzes the carboxylation of biotin on its carrier protein (BCCP) and then the CO(2) group is transferred by the transcarboxylase to acetyl-CoA to form malonyl-CoA. The protein is Acetyl-coenzyme A carboxylase carboxyl transferase subunit beta of Halorhodospira halophila (strain DSM 244 / SL1) (Ectothiorhodospira halophila (strain DSM 244 / SL1)).